The chain runs to 166 residues: UPF0304 protein PBPRA2768 (166 aa).

It belongs to the UPF0304 family.

This Photobacterium profundum (strain SS9) protein is UPF0304 protein PBPRA2768.